The chain runs to 401 residues: Argininosuccinate synthase (401 aa).

10-18 contributes to the ATP binding site; the sequence is AYSGGVDTS. L-citrulline is bound at residue Tyr89. An ATP-binding site is contributed by Gly119. Thr121, Asn125, and Asp126 together coordinate L-aspartate. Asn125 lines the L-citrulline pocket. L-citrulline is bound by residues Arg129, Ser177, Ser186, Glu262, and Tyr274.

The protein belongs to the argininosuccinate synthase family. Type 1 subfamily. As to quaternary structure, homotetramer.

It is found in the cytoplasm. It carries out the reaction L-citrulline + L-aspartate + ATP = 2-(N(omega)-L-arginino)succinate + AMP + diphosphate + H(+). It participates in amino-acid biosynthesis; L-arginine biosynthesis; L-arginine from L-ornithine and carbamoyl phosphate: step 2/3. This is Argininosuccinate synthase from Thermosynechococcus vestitus (strain NIES-2133 / IAM M-273 / BP-1).